We begin with the raw amino-acid sequence, 202 residues long: Imidazoleglycerol-phosphate dehydratase (202 aa).

It belongs to the imidazoleglycerol-phosphate dehydratase family.

Its subcellular location is the cytoplasm. The enzyme catalyses D-erythro-1-(imidazol-4-yl)glycerol 3-phosphate = 3-(imidazol-4-yl)-2-oxopropyl phosphate + H2O. The protein operates within amino-acid biosynthesis; L-histidine biosynthesis; L-histidine from 5-phospho-alpha-D-ribose 1-diphosphate: step 6/9. In Chelativorans sp. (strain BNC1), this protein is Imidazoleglycerol-phosphate dehydratase.